The primary structure comprises 446 residues: MKHPFQIITTDKSGKHLFATVKNNLQVFDLESGSLLGVWIDEVNSNTSLKKQQEEKIKVLQAQQEELTQTSEDTEQENTAPYKKQKSSVSKPIKVPKIPVPGPGAPPIYNYIRALTLSKDEKFLIGITDSDKSVIIFSIDFENTENCLTLIKRQVFPKRPCAVSTSIDDRTVVVADKFGDVYTIEIDSEAAIDEKELSPLLGHVSMLSDVKIAEHNGKQFILTGDRDEHIKVSNYPKSYIVKHWLFGHREFVSSLHIPDFNTDLLISGGGDEFVCLWNWYKNELLSKVPLRDLIQPFLTDSHLPPERFLTEDSKREISISKILTYVNPKSSEKLLIVLCENTNCVLLFELKDDFSIIHKCTLKVNYSLVDICLDQSSGTFIASKDIESGDDLLEFYQINNDSNNLEIVDRSNLSKAISTANNCEVESRDQFYPLYYINSLRKRSEH.

The interval 67–97 is disordered; the sequence is LTQTSEDTEQENTAPYKKQKSSVSKPIKVPK. The span at 87–97 shows a compositional bias: low complexity; that stretch reads SSVSKPIKVPK. WD repeat units follow at residues 107-147, 202-243, and 247-287; these read PIYN…TENC, GHVS…IVKH, and GHRE…LLSK.

The protein belongs to the WD repeat TRM82 family. In terms of assembly, forms a heterodimer with the catalytic subunit TRM8.

The protein resides in the nucleus. It participates in tRNA modification; N(7)-methylguanine-tRNA biosynthesis. Required for the formation of N(7)-methylguanine at position 46 (m7G46) in tRNA. In the complex, it is required to stabilize and induce conformational changes of the catalytic subunit. In Debaryomyces hansenii (strain ATCC 36239 / CBS 767 / BCRC 21394 / JCM 1990 / NBRC 0083 / IGC 2968) (Yeast), this protein is tRNA (guanine-N(7)-)-methyltransferase non-catalytic subunit TRM82.